The following is a 328-amino-acid chain: Homeobox protein DLX-2 (328 aa).

Polar residues-rich tracts occupy residues 16–28 (QIAA…QHQQ) and 52–72 (ESPT…NQQH). 3 disordered regions span residues 16 to 81 (QIAA…GGGG), 211 to 270 (WKSG…SSPS), and 300 to 328 (LHPT…GTIF). A DNA-binding region (homeobox) is located at residues 152 to 211 (VRKPRTIYSSFQLAALQRRFQKTQYLALPERAELAASLGLTQTQVKIWFQNRRSKFKKMW). S232 carries the phosphoserine modification. Positions 250–264 (AGGGGPGSGGSGAGS) are enriched in gly residues.

It belongs to the distal-less homeobox family. As to quaternary structure, interacts (via homeobox DNA-binding domain) with POU4F2; this interaction enhances retinal ganglion cell (RGC) differentiation.

Its subcellular location is the nucleus. In terms of biological role, acts as a transcriptional activator. Activates transcription of CGA/alpha-GSU, via binding to the downstream activin regulatory element (DARE) in the gene promoter. Plays a role in terminal differentiation of interneurons, such as amacrine and bipolar cells in the developing retina. Likely to play a regulatory role in the development of the ventral forebrain. May play a role in craniofacial patterning and morphogenesis. This Homo sapiens (Human) protein is Homeobox protein DLX-2 (DLX2).